The primary structure comprises 280 residues: Phosphonates import ATP-binding protein PhnC (280 aa).

The 244-residue stretch at 2 to 245 folds into the ABC transporter domain; sequence FELKNVTRRF…AVKEIYGTDK (244 aa). 34–41 lines the ATP pocket; it reads GRSGAGKS. The tract at residues 257–280 is disordered; sequence TSLESKRRAEDVSSGRVAKAAAVH. The segment covering 260–269 has biased composition (basic and acidic residues); it reads ESKRRAEDVS.

Belongs to the ABC transporter superfamily. Phosphonates importer (TC 3.A.1.9.1) family. As to quaternary structure, the complex is composed of two ATP-binding proteins (PhnC), two transmembrane proteins (PhnE) and a solute-binding protein (PhnD).

Its subcellular location is the cell inner membrane. It catalyses the reaction phosphonate(out) + ATP + H2O = phosphonate(in) + ADP + phosphate + H(+). Part of the ABC transporter complex PhnCDE involved in phosphonates import. Responsible for energy coupling to the transport system. The protein is Phosphonates import ATP-binding protein PhnC of Rhizobium johnstonii (strain DSM 114642 / LMG 32736 / 3841) (Rhizobium leguminosarum bv. viciae).